The following is a 301-amino-acid chain: uncharacterized protein (301 aa).

A Radical SAM core domain is found at 45-286 (KELSDGWALN…EELGKMFTEL (242 aa)).

This is an uncharacterized protein from Acidianus two-tailed virus (ATV).